The primary structure comprises 292 residues: WRKY transcription factor 55 (292 aa).

The interval 133-155 (VERSGASGSSTPRQRRRKDEGEE) is disordered. Positions 167–235 (NTDLPPDDNH…YRGSHTCYNS (69 aa)) form a DNA-binding region, WRKY.

It belongs to the WRKY group III family.

The protein resides in the nucleus. In terms of biological role, transcription factor. Interacts specifically with the W box (5'-(T)TGAC[CT]-3'), a frequently occurring elicitor-responsive cis-acting element. The chain is WRKY transcription factor 55 (WRKY55) from Arabidopsis thaliana (Mouse-ear cress).